A 448-amino-acid polypeptide reads, in one-letter code: Adenylyltransferase and sulfurtransferase UBA4 (448 aa).

ATP contacts are provided by residues Gly88, Asp109, 116 to 120, Lys133, and 177 to 178; these read SNLHR and DT. The Zn(2+) site is built by Cys219 and Cys222. Residue Cys236 is the Glycyl thioester intermediate; for adenylyltransferase activity of the active site. 2 residues coordinate Zn(2+): Cys297 and Cys300. In terms of domain architecture, Rhodanese spans 349–446; that stretch reads QGENSILIDV…WSKEIDSKIP (98 aa). Catalysis depends on Cys405, which acts as the Cysteine persulfide intermediate; for sulfurtransferase activity.

The protein in the N-terminal section; belongs to the HesA/MoeB/ThiF family. UBA4 subfamily. Zn(2+) serves as cofactor.

It localises to the cytoplasm. Its subcellular location is the cytosol. It functions in the pathway tRNA modification; 5-methoxycarbonylmethyl-2-thiouridine-tRNA biosynthesis. Plays a central role in 2-thiolation of mcm(5)S(2)U at tRNA wobble positions of cytosolic tRNA(Lys), tRNA(Glu) and tRNA(Gln). Acts by mediating the C-terminal thiocarboxylation of sulfur carrier URM1. Its N-terminus first activates URM1 as acyl-adenylate (-COAMP), then the persulfide sulfur on the catalytic cysteine is transferred to URM1 to form thiocarboxylation (-COSH) of its C-terminus. The reaction probably involves hydrogen sulfide that is generated from the persulfide intermediate and that acts as a nucleophile towards URM1. Subsequently, a transient disulfide bond is formed. Does not use thiosulfate as sulfur donor; NFS1 probably acting as a sulfur donor for thiocarboxylation reactions. Prior mcm(5) tRNA modification by the elongator complex is required for 2-thiolation. May also be involved in protein urmylation. This chain is Adenylyltransferase and sulfurtransferase UBA4, found in Debaryomyces hansenii (strain ATCC 36239 / CBS 767 / BCRC 21394 / JCM 1990 / NBRC 0083 / IGC 2968) (Yeast).